Here is a 426-residue protein sequence, read N- to C-terminus: Histidine--tRNA ligase (426 aa).

It belongs to the class-II aminoacyl-tRNA synthetase family. Homodimer.

The protein resides in the cytoplasm. It carries out the reaction tRNA(His) + L-histidine + ATP = L-histidyl-tRNA(His) + AMP + diphosphate + H(+). The protein is Histidine--tRNA ligase of Prochlorococcus marinus (strain MIT 9301).